Here is a 242-residue protein sequence, read N- to C-terminus: tRNA1(Val) (adenine(37)-N6)-methyltransferase (242 aa).

The protein belongs to the methyltransferase superfamily. tRNA (adenine-N(6)-)-methyltransferase family.

It localises to the cytoplasm. It catalyses the reaction adenosine(37) in tRNA1(Val) + S-adenosyl-L-methionine = N(6)-methyladenosine(37) in tRNA1(Val) + S-adenosyl-L-homocysteine + H(+). In terms of biological role, specifically methylates the adenine in position 37 of tRNA(1)(Val) (anticodon cmo5UAC). The polypeptide is tRNA1(Val) (adenine(37)-N6)-methyltransferase (Mannheimia succiniciproducens (strain KCTC 0769BP / MBEL55E)).